The sequence spans 334 residues: Aspartate carbamoyltransferase catalytic subunit (334 aa).

Residues Arg70 and Thr71 each coordinate carbamoyl phosphate. Lys98 contributes to the L-aspartate binding site. Residues Arg120, His150, and Gln153 each coordinate carbamoyl phosphate. 2 residues coordinate L-aspartate: Arg183 and Arg239. Carbamoyl phosphate is bound by residues Gly280 and Pro281.

The protein belongs to the aspartate/ornithine carbamoyltransferase superfamily. ATCase family. As to quaternary structure, heterododecamer (2C3:3R2) of six catalytic PyrB chains organized as two trimers (C3), and six regulatory PyrI chains organized as three dimers (R2).

It carries out the reaction carbamoyl phosphate + L-aspartate = N-carbamoyl-L-aspartate + phosphate + H(+). Its pathway is pyrimidine metabolism; UMP biosynthesis via de novo pathway; (S)-dihydroorotate from bicarbonate: step 2/3. Catalyzes the condensation of carbamoyl phosphate and aspartate to form carbamoyl aspartate and inorganic phosphate, the committed step in the de novo pyrimidine nucleotide biosynthesis pathway. The sequence is that of Aspartate carbamoyltransferase catalytic subunit from Pseudomonas aeruginosa (strain LESB58).